The following is a 1383-amino-acid chain: DNA-directed RNA polymerase subunit beta'' (1383 aa).

Cys-220, Cys-289, Cys-296, and Cys-299 together coordinate Zn(2+).

The protein belongs to the RNA polymerase beta' chain family. RpoC2 subfamily. In terms of assembly, in plastids the minimal PEP RNA polymerase catalytic core is composed of four subunits: alpha, beta, beta', and beta''. When a (nuclear-encoded) sigma factor is associated with the core the holoenzyme is formed, which can initiate transcription. It depends on Zn(2+) as a cofactor.

The protein resides in the plastid. It localises to the chloroplast. It carries out the reaction RNA(n) + a ribonucleoside 5'-triphosphate = RNA(n+1) + diphosphate. In terms of biological role, DNA-dependent RNA polymerase catalyzes the transcription of DNA into RNA using the four ribonucleoside triphosphates as substrates. In Oenothera argillicola (Appalachian evening primrose), this protein is DNA-directed RNA polymerase subunit beta''.